Consider the following 770-residue polypeptide: MSARSAYLCQIQICNGFLIAAGLLAVGLAGSQFSKVGLDNYRDIDFRLLNFIHVVTGCIGFYSLWRNHGSIVTKSLYLVSFVIGFATAVFYGFTTYRVVKAGENLNQLQSADGFNEEFQSENSNYAGRIVISALMIASGAVASLFSLFAIFLLSKIIVVTIPVYPLQSREQELAMSSAKKTLASIGLIKFILAFGILGLCVFIEYEHENVAGQDKYIKIGLDHISAMLCIVSGAMDIWATKGKNQQNLNLKVALAVAVVAATWCLKTVDNNAMPFYKNDLKFYYQGREVGDPSITSTDAPRYILVVAHGVLLGCFGIAFFLSTLSAVIVGTYLHLDFHSMHTEVNKSIKIQTGVLNVLHVFWGACMLALCILGLLDTWWRGEFLGADLLWVSVLFMTTGLMTSNNYSVMITTKFILSVVCLGISVEKMCASANLIYQMAAYPAYRNGNDRTFVAQIILYSIQAGIYLLEALTSLAGSYLYGTELRKQPNLTYRHSNGVHGLFSLGTLFYAVVITGTYIVFELGKWRYNEIPIEVPFFRLGNGPLAGAVFIVQFLCIPFPSLLASASILNIIIASISLFTVSSAITNVYYLQRYLQASDLLPTTETQQTIYQVAIILAAGAALACVICTVCAIICSLRSSYILHHRSTSPDSTVVAPLGEEQFGSGTLRVGTHMRTPSRPFHPQQSPAGGGVQPMEEQSVYWSADENPFYYHTSKRFYGKPYQIESGFYGYALAGSGSGQPGQSPANVGDDPNRMVQSSASQTQIGHVFNN.

A disordered region spans residues 736–770 (GSGQPGQSPANVGDDPNRMVQSSASQTQIGHVFNN). The segment covering 754 to 770 (MVQSSASQTQIGHVFNN) has biased composition (polar residues).

This is an uncharacterized protein from Caenorhabditis elegans.